The following is a 238-amino-acid chain: Small ribosomal subunit protein uS2 (238 aa).

Belongs to the universal ribosomal protein uS2 family.

The polypeptide is Small ribosomal subunit protein uS2 (Chloroflexus aurantiacus (strain ATCC 29366 / DSM 635 / J-10-fl)).